We begin with the raw amino-acid sequence, 306 residues long: tRNA dimethylallyltransferase (306 aa).

ATP is bound at residue Gly12–Thr19. Substrate is bound at residue Thr14–Thr19. Interaction with substrate tRNA regions lie at residues Asp37–Leu40, Gln161–Arg165, and Arg242–Arg247.

Belongs to the IPP transferase family. Monomer. The cofactor is Mg(2+).

It carries out the reaction adenosine(37) in tRNA + dimethylallyl diphosphate = N(6)-dimethylallyladenosine(37) in tRNA + diphosphate. Functionally, catalyzes the transfer of a dimethylallyl group onto the adenine at position 37 in tRNAs that read codons beginning with uridine, leading to the formation of N6-(dimethylallyl)adenosine (i(6)A). This is tRNA dimethylallyltransferase from Shewanella amazonensis (strain ATCC BAA-1098 / SB2B).